The following is a 130-amino-acid chain: Methylglyoxal synthase (130 aa).

The MGS-like domain occupies 1 to 130; it reads MSTPRIALIA…DLARRLPVKA (130 aa). Substrate contacts are provided by residues histidine 11, lysine 15, 37–40, and 57–58; these read TGTT and SG. The Proton donor/acceptor role is filled by aspartate 63. Histidine 90 is a substrate binding site.

The protein belongs to the methylglyoxal synthase family.

It carries out the reaction dihydroxyacetone phosphate = methylglyoxal + phosphate. Catalyzes the formation of methylglyoxal from dihydroxyacetone phosphate. The chain is Methylglyoxal synthase from Burkholderia thailandensis (strain ATCC 700388 / DSM 13276 / CCUG 48851 / CIP 106301 / E264).